The chain runs to 301 residues: Acetylglutamate kinase (301 aa).

Substrate-binding positions include 68–69 (GG), arginine 90, and asparagine 195.

This sequence belongs to the acetylglutamate kinase family. ArgB subfamily.

It is found in the cytoplasm. The catalysed reaction is N-acetyl-L-glutamate + ATP = N-acetyl-L-glutamyl 5-phosphate + ADP. Its pathway is amino-acid biosynthesis; L-arginine biosynthesis; N(2)-acetyl-L-ornithine from L-glutamate: step 2/4. Its function is as follows. Catalyzes the ATP-dependent phosphorylation of N-acetyl-L-glutamate. In Pseudomonas paraeruginosa (strain DSM 24068 / PA7) (Pseudomonas aeruginosa (strain PA7)), this protein is Acetylglutamate kinase.